The sequence spans 102 residues: NADH-quinone oxidoreductase subunit K (102 aa).

3 helical membrane passes run 6-26 (MEHG…GLMV), 30-50 (ILFV…AFVV), and 62-82 (IMFI…LAIL).

This sequence belongs to the complex I subunit 4L family. As to quaternary structure, NDH-1 is composed of 13 different subunits. Subunits NuoA, H, J, K, L, M, N constitute the membrane sector of the complex.

It localises to the cell inner membrane. The enzyme catalyses a quinone + NADH + 5 H(+)(in) = a quinol + NAD(+) + 4 H(+)(out). Its function is as follows. NDH-1 shuttles electrons from NADH, via FMN and iron-sulfur (Fe-S) centers, to quinones in the respiratory chain. The immediate electron acceptor for the enzyme in this species is believed to be ubiquinone. Couples the redox reaction to proton translocation (for every two electrons transferred, four hydrogen ions are translocated across the cytoplasmic membrane), and thus conserves the redox energy in a proton gradient. This Azotobacter vinelandii (strain DJ / ATCC BAA-1303) protein is NADH-quinone oxidoreductase subunit K.